We begin with the raw amino-acid sequence, 385 residues long: Leucine aminopeptidase 1 (385 aa).

An N-terminal signal peptide occupies residues 1 to 19 (MKFPSFLSLGIAASTTALA). Positions 20-87 (ALPDQKPIGD…FPRAFAKTAV (68 aa)) are excised as a propeptide. Asn-177 carries an N-linked (GlcNAc...) asparagine glycan. Positions 185 and 204 each coordinate Zn(2+). N-linked (GlcNAc...) asparagine glycosylation occurs at Asn-229. Residues Glu-243 and Asp-270 each coordinate Zn(2+). Cys-319 and Cys-323 are oxidised to a cystine. His-352 lines the Zn(2+) pocket.

This sequence belongs to the peptidase M28 family. M28E subfamily. In terms of assembly, monomer. The cofactor is Zn(2+).

The protein localises to the secreted. Functionally, extracellular aminopeptidase that allows assimilation of proteinaceous substrates. This Ajellomyces dermatitidis (strain ER-3 / ATCC MYA-2586) (Blastomyces dermatitidis) protein is Leucine aminopeptidase 1 (LAP1).